The chain runs to 403 residues: F-box/kelch-repeat protein At5g43190 (403 aa).

In terms of domain architecture, F-box spans 45–91 (PNIWSNLPNHLLEHILSLLPFKTLLTLRSISRHLRSLILSPSFISDH). Kelch repeat units follow at residues 91–140 (HSFS…LLSS), 192–240 (KIFT…VFYN), 291–339 (ILYM…VCYH), and 343–393 (HVYC…FRWF).

The protein is F-box/kelch-repeat protein At5g43190 of Arabidopsis thaliana (Mouse-ear cress).